Here is a 527-residue protein sequence, read N- to C-terminus: Inosine-5'-monophosphate dehydrogenase (527 aa).

2 CBS domains span residues 121–183 (FILD…VTAV) and 184–240 (MSTD…PLAS). NAD(+) is bound by residues 277–279 (DSS) and 327–329 (GMG). Residues Gly-329 and Gly-331 each coordinate K(+). Position 332 (Ser-332) interacts with IMP. Cys-334 serves as a coordination point for K(+). The Thioimidate intermediate role is filled by Cys-334. IMP is bound by residues 367–369 (DGG) and 390–391 (GS). Arg-440 serves as the catalytic Proton acceptor. Residue Gln-452 coordinates IMP. The interval 506–527 (ASAQTEGNVHGLHSHEKKLYSS) is disordered. 2 residues coordinate K(+): Glu-511 and Gly-512. Over residues 518-527 (HSHEKKLYSS) the composition is skewed to basic and acidic residues.

Belongs to the IMPDH/GMPR family. Homotetramer. K(+) serves as cofactor.

It is found in the cytoplasm. It carries out the reaction IMP + NAD(+) + H2O = XMP + NADH + H(+). The protein operates within purine metabolism; XMP biosynthesis via de novo pathway; XMP from IMP: step 1/1. With respect to regulation, mycophenolic acid (MPA) is a non-competitive inhibitor that prevents formation of the closed enzyme conformation by binding to the same site as the amobile flap. In contrast, mizoribine monophosphate (MZP) is a competitive inhibitor that induces the closed conformation. MPA is a potent inhibitor of mammalian IMPDHs but a poor inhibitor of the bacterial enzymes. MZP is a more potent inhibitor of bacterial IMPDH. Functionally, catalyzes the conversion of inosine 5'-phosphate (IMP) to xanthosine 5'-phosphate (XMP), the first committed and rate-limiting step in the de novo synthesis of guanine nucleotides, and therefore plays an important role in the regulation of cell growth. Part of the gene cluster that mediates the biosynthesis of mycophenolic acid (MPA), the first isolated antibiotic natural product in the world. Does not play a role in the biosynthesis of MPA, but is involved in self resistance to MPA, since MPA acts as an inhibitor of IMP dehydrogenases. The polypeptide is Inosine-5'-monophosphate dehydrogenase (Penicillium brevicompactum).